The primary structure comprises 150 residues: MKRLCIIPCGKKKIWDVQPDAGPVRAEDAYLSPFHQACERYAKTFFDEWVILSAKHGFLRPDDLVSGNYDVTFGTGHPEIMTADELRRQFHEKGFSDIEELVMLGGKKYRSVLNAVIGEHQHISWPLSSYKGIGYMLQALNRAVEEKHEL.

This is an uncharacterized protein from Bacillus subtilis (strain 168).